Reading from the N-terminus, the 451-residue chain is Vitamin D3 receptor (451 aa).

The segment at residues 44 to 112 (PRICGVCGDR…RLKRCVDIGM (69 aa)) is a DNA-binding region (nuclear receptor). 8 residues coordinate Zn(2+): C47, C50, C64, C67, C83, C89, C99, and C102. NR C4-type zinc fingers lie at residues 47–67 (CGVC…CEGC) and 83–107 (CPFN…LKRC). Hinge regions lie at residues 113–149 (MKEF…KLSE) and 120–149 (DEEV…KLSE). One can recognise an NR LBD domain in the interval 150–447 (EQQKVIDTLL…LTPLVLEVFG (298 aa)). S261 lines the calcitriol pocket. The interaction with coactivator LXXLL motif stretch occupies residues 270 to 288 (KMIPGFRDLTAEDQIALLK). Calcitriol-binding residues include R298, S302, H329, and H421. Residues 440 to 448 (PLVLEVFGN) carry the 9aaTAD motif.

It belongs to the nuclear hormone receptor family. NR1 subfamily. In terms of assembly, homodimer in the absence of bound vitamin D3. Heterodimer with RXRA after vitamin D3 binding. In terms of tissue distribution, expressed in kidney and intestine.

It is found in the nucleus. The protein localises to the cytoplasm. Functionally, nuclear receptor for calcitriol, the active form of vitamin D3 which mediates the action of this vitamin on cells. Enters the nucleus upon vitamin D3 binding where it forms heterodimers with the retinoid X receptor/RXR. The VDR-RXR heterodimers bind to specific response elements on DNA and activate the transcription of vitamin D3-responsive target genes. Plays a central role in calcium homeostasis. Also functions as a receptor for the secondary bile acid lithocholic acid (LCA) and its metabolites. This chain is Vitamin D3 receptor (VDR), found in Gallus gallus (Chicken).